The primary structure comprises 431 residues: MPNVVVVGAQWGDEGKGKIVDLLTEHADVVVRFQGGNNAGHTLVVNGEKTVLHLIPAGILHPGKSCVIGNGVVFDPEVFVMEVDRLKSRNALADDSQLVVSLDAHVIMPWHKAIDIAREQAMGAGKIGTTGRGIGPTYEDKVARRGLRIRDLLDAARLERKVKERLPAAREELSRLGATPELDEAAIVARYSELGRRVARYAADVSLWLHRALQNGKQLLFEGAQGTMLDVDHGTYPFVTSSNTVAGNAVVGCGLGPTAVDYVLGISKAYSTRVGGGPYPSELKDETGERLRKIGGEFGATTGRPRRTGWLDALALRYAARVNGLHGIAMTKLDVLAGFETVKIAVGYRVDGKVLDEMPSDPELLERAEAVYEELPGWTEKLEDLRSWDDLPPRARAYVKRVEQLVGVPVVGLSVGADRGQTILLENPFRA.

Residues 12–18 (GDEGKGK) and 40–42 (GHT) contribute to the GTP site. Asp-13 (proton acceptor) is an active-site residue. Mg(2+)-binding residues include Asp-13 and Gly-40. IMP is bound by residues 13 to 16 (DEGK), 38 to 41 (NAGH), Thr-130, Arg-144, Gln-225, Thr-240, and Arg-304. His-41 acts as the Proton donor in catalysis. Residue 300–306 (ATTGRPR) coordinates substrate. GTP-binding positions include Arg-306, 332 to 334 (KLD), and 414 to 416 (SVG).

This sequence belongs to the adenylosuccinate synthetase family. As to quaternary structure, homodimer. It depends on Mg(2+) as a cofactor.

The protein localises to the cytoplasm. The enzyme catalyses IMP + L-aspartate + GTP = N(6)-(1,2-dicarboxyethyl)-AMP + GDP + phosphate + 2 H(+). Its pathway is purine metabolism; AMP biosynthesis via de novo pathway; AMP from IMP: step 1/2. Functionally, plays an important role in the de novo pathway of purine nucleotide biosynthesis. Catalyzes the first committed step in the biosynthesis of AMP from IMP. The protein is Adenylosuccinate synthetase of Anaeromyxobacter sp. (strain Fw109-5).